The following is a 489-amino-acid chain: Carboxyl-terminal-processing peptidase 1, chloroplastic (489 aa).

Low complexity predominate over residues 1-20 (MRLLLPFSSPLSATSSPSTP). The tract at residues 1-27 (MRLLLPFSSPLSATSSPSTPQFIPELP) is disordered. In terms of domain architecture, PDZ spans 189–273 (FSRMSKYDIT…TFVVLKVKHG (85 aa)). Catalysis depends on charge relay system residues serine 403 and lysine 428.

It belongs to the peptidase S41A family.

It localises to the plastid. The protein resides in the chloroplast thylakoid lumen. It carries out the reaction The enzyme shows specific recognition of a C-terminal tripeptide, Xaa-Yaa-Zaa, in which Xaa is preferably Ala or Leu, Yaa is preferably Ala or Tyr, and Zaa is preferably Ala, but then cleaves at a variable distance from the C-terminus. A typical cleavage is -Ala-Ala-|-Arg-Ala-Ala-Lys-Glu-Asn-Tyr-Ala-Leu-Ala-Ala.. Functionally, protease involved in the C-terminal processing of the chloroplastic D1 protein of photosystem II. This proteolytic processing is necessary to allow the light-driven assembly of the tetranuclear manganese cluster, which is responsible for photosynthetic water oxidation. The protein is Carboxyl-terminal-processing peptidase 1, chloroplastic (CTPA1) of Arabidopsis thaliana (Mouse-ear cress).